The following is a 349-amino-acid chain: uncharacterized protein (349 aa).

Positions M1 to A16 are cleaved as a signal peptide. Residues M17 to S326 are Lumenal-facing. Disordered stretches follow at residues A115–R190 and T243–S322. Composition is skewed to low complexity over residues S116–T176, T243–G278, and S289–S322. The helical transmembrane segment at L327–L347 threads the bilayer. Topologically, residues T348–L349 are cytoplasmic.

Its subcellular location is the endoplasmic reticulum membrane. This is an uncharacterized protein from Schizosaccharomyces pombe (strain 972 / ATCC 24843) (Fission yeast).